A 229-amino-acid polypeptide reads, in one-letter code: Growth factor receptor-bound protein 2 (229 aa).

SH3 domains follow at residues 1-58 (MEAV…MKPH) and 168-227 (QQPT…PVNR). The 112-residue stretch at 60-171 (WFFGKIPRAK…RATNLLQQPT (112 aa)) folds into the SH2 domain.

It is found in the nucleus. Its subcellular location is the cytoplasm. It localises to the endosome. The protein localises to the golgi apparatus. In terms of biological role, adapter protein that provides a critical link between cell surface growth factor receptors and the Ras signaling pathway. Promotes meiotic reinitiation during oocyte maturation. The chain is Growth factor receptor-bound protein 2 from Xenopus tropicalis (Western clawed frog).